We begin with the raw amino-acid sequence, 140 residues long: MAKKVEKVVKLQIPAGKANPAPPVGPALGQAGVNIMGFCKEFNARTQEQAGLIIPVEISVYEDRSFTFITKTPPAPVLLKKAAGVEKGSGEPNKNKVATVTKDQVREIAQTKMPDLNAADEEAAMRIIEGTARSMGITVE.

The protein belongs to the universal ribosomal protein uL11 family. In terms of assembly, part of the ribosomal stalk of the 50S ribosomal subunit. Interacts with L10 and the large rRNA to form the base of the stalk. L10 forms an elongated spine to which L12 dimers bind in a sequential fashion forming a multimeric L10(L12)X complex. Post-translationally, one or more lysine residues are methylated.

Functionally, forms part of the ribosomal stalk which helps the ribosome interact with GTP-bound translation factors. The chain is Large ribosomal subunit protein uL11 from Staphylococcus carnosus (strain TM300).